Reading from the N-terminus, the 220-residue chain is Dual specificity phosphatase 29 (220 aa).

Over residues 1-15 (MTSGEVKTSLKNAYS) the composition is skewed to polar residues. Residues 1–29 (MTSGEVKTSLKNAYSSAKRLSPKMEEEGE) form a disordered region. Positions 54–202 (HVNEVWPKLY…LRELDKQLVQ (149 aa)) constitute a Tyrosine-protein phosphatase domain. Residue 146 to 153 (HCVMGRSR) participates in substrate binding. Cys147 acts as the Phosphocysteine intermediate in catalysis.

The protein belongs to the protein-tyrosine phosphatase family. Non-receptor class dual specificity subfamily. As to quaternary structure, homodimer. Interacts with PRKAA2.

Its subcellular location is the cytoplasm. The protein localises to the nucleus. It carries out the reaction O-phospho-L-tyrosyl-[protein] + H2O = L-tyrosyl-[protein] + phosphate. The catalysed reaction is O-phospho-L-seryl-[protein] + H2O = L-seryl-[protein] + phosphate. The enzyme catalyses O-phospho-L-threonyl-[protein] + H2O = L-threonyl-[protein] + phosphate. In terms of biological role, dual specificity phosphatase able to dephosphorylate phosphotyrosine, phosphoserine and phosphothreonine residues within the same substrate, with a preference for phosphotyrosine as a substrate. Involved in the modulation of intracellular signaling cascades. In skeletal muscle regulates systemic glucose homeostasis by activating, AMPK, an energy sensor protein kinase. Affects MAP kinase signaling though modulation of the MAPK1/2 cascade in skeletal muscle promoting muscle cell differentiation, development and atrophy. This chain is Dual specificity phosphatase 29, found in Homo sapiens (Human).